Reading from the N-terminus, the 224-residue chain is uncharacterized protein (224 aa).

Asp52 is an active-site residue.

This sequence belongs to the pseudouridine synthase RluA family.

The catalysed reaction is a uridine in RNA = a pseudouridine in RNA. This is an uncharacterized protein from Haemophilus influenzae (strain ATCC 51907 / DSM 11121 / KW20 / Rd).